The following is a 198-amino-acid chain: Protein-L-isoaspartate O-methyltransferase (198 aa).

S50 is an active-site residue.

This sequence belongs to the methyltransferase superfamily. L-isoaspartyl/D-aspartyl protein methyltransferase family.

It localises to the cytoplasm. It catalyses the reaction [protein]-L-isoaspartate + S-adenosyl-L-methionine = [protein]-L-isoaspartate alpha-methyl ester + S-adenosyl-L-homocysteine. In terms of biological role, catalyzes the methyl esterification of L-isoaspartyl residues in peptides and proteins that result from spontaneous decomposition of normal L-aspartyl and L-asparaginyl residues. It plays a role in the repair and/or degradation of damaged proteins. The chain is Protein-L-isoaspartate O-methyltransferase from Thermosipho melanesiensis (strain DSM 12029 / CIP 104789 / BI429).